Reading from the N-terminus, the 371-residue chain is SufE-like protein 1, chloroplastic/mitochondrial (371 aa).

The transit peptide at 1–66 (MAAAMSSSCC…ISTGIVPPPS (66 aa)) directs the protein to the chloroplast and mitochondrion. The active-site Cysteine persulfide intermediate is the C131. At C131 the chain carries S-glutathionyl cysteine. Positions 218–249 (VKGEEDSSSGESSESSFVSIPETKDEANVPEV) are disordered.

It belongs to the SufE family. In terms of assembly, heterotetramer with NFS2. Interacts with NFS2 and NIFS1. Interacts in vitro with GRXS14, GRXS15, GRXS16 and GRXS17, but not with GRXC5. Interacts in vivo only with GRXS14 and GRXS16. In terms of processing, glutathionylated. Glutathionylation strongly reduces the stimulation of NFS2 activity. As to expression, expressed in roots, leaves, stems and flowers.

The protein resides in the plastid. It localises to the chloroplast stroma. Its subcellular location is the mitochondrion. The protein operates within cofactor biosynthesis; iron-sulfur cluster biosynthesis. In terms of biological role, participates in cysteine desulfurization mediated by NFS2 in chloroplast and NIFS1 in mitochondrion. Activates the cysteine desulfurase activity of NFS2. Cysteine desulfurization mobilizes sulfur from L-cysteine to yield L-alanine and supplies the inorganic sulfur for iron-sulfur (Fe-S) cluster formation. Glutaredoxins regulate SUFE1 activity by inducing its reduction and deglutathionylation. In Arabidopsis thaliana (Mouse-ear cress), this protein is SufE-like protein 1, chloroplastic/mitochondrial.